A 107-amino-acid chain; its full sequence is Iron-binding protein IscA (107 aa).

Cys35, Cys99, and Cys101 together coordinate Fe cation.

The protein belongs to the HesB/IscA family. Homodimer; may form tetramers and higher multimers. Requires Fe cation as cofactor.

Its function is as follows. Is able to transfer iron-sulfur clusters to apo-ferredoxin. Multiple cycles of [2Fe2S] cluster formation and transfer are observed, suggesting that IscA acts catalytically. Recruits intracellular free iron so as to provide iron for the assembly of transient iron-sulfur cluster in IscU in the presence of IscS, L-cysteine and the thioredoxin reductase system TrxA/TrxB. In Proteus mirabilis (strain HI4320), this protein is Iron-binding protein IscA.